Consider the following 456-residue polypeptide: Bifunctional protein GlmU (456 aa).

Residues 1–229 are pyrophosphorylase; it reads MSNRPMSVVI…TTETDGVNNR (229 aa). UDP-N-acetyl-alpha-D-glucosamine contacts are provided by residues 11–14, lysine 25, glutamine 76, 81–82, 103–105, glycine 140, glutamate 154, asparagine 169, and asparagine 227; these read LAAG, GT, and YGD. Residue aspartate 105 coordinates Mg(2+). Position 227 (asparagine 227) interacts with Mg(2+). A linker region spans residues 230 to 250; that stretch reads LQLATLERVYQAEQAEKLLLS. Residues 251-456 form an N-acetyltransferase region; it reads GVMLQDPARF…ASWQRPQKKK (206 aa). UDP-N-acetyl-alpha-D-glucosamine-binding residues include arginine 333 and lysine 351. Catalysis depends on histidine 363, which acts as the Proton acceptor. The UDP-N-acetyl-alpha-D-glucosamine site is built by tyrosine 366 and asparagine 377. Residues alanine 380, 386–387, serine 405, alanine 423, and arginine 440 contribute to the acetyl-CoA site; that span reads NY.

In the N-terminal section; belongs to the N-acetylglucosamine-1-phosphate uridyltransferase family. It in the C-terminal section; belongs to the transferase hexapeptide repeat family. Homotrimer. Mg(2+) is required as a cofactor.

Its subcellular location is the cytoplasm. It carries out the reaction alpha-D-glucosamine 1-phosphate + acetyl-CoA = N-acetyl-alpha-D-glucosamine 1-phosphate + CoA + H(+). The enzyme catalyses N-acetyl-alpha-D-glucosamine 1-phosphate + UTP + H(+) = UDP-N-acetyl-alpha-D-glucosamine + diphosphate. The protein operates within nucleotide-sugar biosynthesis; UDP-N-acetyl-alpha-D-glucosamine biosynthesis; N-acetyl-alpha-D-glucosamine 1-phosphate from alpha-D-glucosamine 6-phosphate (route II): step 2/2. Its pathway is nucleotide-sugar biosynthesis; UDP-N-acetyl-alpha-D-glucosamine biosynthesis; UDP-N-acetyl-alpha-D-glucosamine from N-acetyl-alpha-D-glucosamine 1-phosphate: step 1/1. It participates in bacterial outer membrane biogenesis; LPS lipid A biosynthesis. Its function is as follows. Catalyzes the last two sequential reactions in the de novo biosynthetic pathway for UDP-N-acetylglucosamine (UDP-GlcNAc). The C-terminal domain catalyzes the transfer of acetyl group from acetyl coenzyme A to glucosamine-1-phosphate (GlcN-1-P) to produce N-acetylglucosamine-1-phosphate (GlcNAc-1-P), which is converted into UDP-GlcNAc by the transfer of uridine 5-monophosphate (from uridine 5-triphosphate), a reaction catalyzed by the N-terminal domain. The polypeptide is Bifunctional protein GlmU (Erwinia tasmaniensis (strain DSM 17950 / CFBP 7177 / CIP 109463 / NCPPB 4357 / Et1/99)).